A 178-amino-acid chain; its full sequence is Inorganic pyrophosphatase (178 aa).

Residues Lys29, Arg43, and Tyr55 each contribute to the substrate site. Residues Asp65, Asp70, and Asp102 each coordinate Mg(2+). A substrate-binding site is contributed by Tyr141.

Belongs to the PPase family. In terms of assembly, homohexamer. Mg(2+) serves as cofactor.

The protein resides in the cytoplasm. It carries out the reaction diphosphate + H2O = 2 phosphate + H(+). In terms of biological role, catalyzes the hydrolysis of inorganic pyrophosphate (PPi) forming two phosphate ions. In Rickettsia typhi (strain ATCC VR-144 / Wilmington), this protein is Inorganic pyrophosphatase.